The following is a 312-amino-acid chain: Aspartate carbamoyltransferase catalytic subunit (312 aa).

Residues arginine 55 and threonine 56 each coordinate carbamoyl phosphate. Residue lysine 83 participates in L-aspartate binding. Carbamoyl phosphate contacts are provided by arginine 105, histidine 138, and glutamine 141. Residues arginine 171 and arginine 225 each contribute to the L-aspartate site. Carbamoyl phosphate is bound by residues glycine 266 and proline 267.

The protein belongs to the aspartate/ornithine carbamoyltransferase superfamily. ATCase family. As to quaternary structure, heterododecamer (2C3:3R2) of six catalytic PyrB chains organized as two trimers (C3), and six regulatory PyrI chains organized as three dimers (R2).

It catalyses the reaction carbamoyl phosphate + L-aspartate = N-carbamoyl-L-aspartate + phosphate + H(+). The protein operates within pyrimidine metabolism; UMP biosynthesis via de novo pathway; (S)-dihydroorotate from bicarbonate: step 2/3. Functionally, catalyzes the condensation of carbamoyl phosphate and aspartate to form carbamoyl aspartate and inorganic phosphate, the committed step in the de novo pyrimidine nucleotide biosynthesis pathway. The chain is Aspartate carbamoyltransferase catalytic subunit from Corynebacterium glutamicum (strain ATCC 13032 / DSM 20300 / JCM 1318 / BCRC 11384 / CCUG 27702 / LMG 3730 / NBRC 12168 / NCIMB 10025 / NRRL B-2784 / 534).